A 227-amino-acid polypeptide reads, in one-letter code: C4-dicarboxylate TRAP transporter small permease protein DctQ (227 aa).

Over methionine 1–arginine 7 the chain is Cytoplasmic. Residues alanine 8–valine 28 form a helical membrane-spanning segment. Residues threonine 29–asparagine 67 lie on the Periplasmic side of the membrane. Residues leucine 68–alanine 88 traverse the membrane as a helical segment. Over tyrosine 89–arginine 112 the chain is Cytoplasmic. A helical transmembrane segment spans residues phenylalanine 113 to glycine 133. Residues alanine 134–aspartate 149 lie on the Periplasmic side of the membrane. The chain crosses the membrane as a helical span at residues leucine 150–phenylalanine 170. Topologically, residues arginine 171 to asparagine 227 are cytoplasmic.

This sequence belongs to the TRAP transporter small permease family. The complex comprises the extracytoplasmic solute receptor protein DctP, and the two transmembrane proteins DctQ and DctM.

It localises to the cell inner membrane. Its function is as follows. Part of the tripartite ATP-independent periplasmic (TRAP) transport system DctPQM involved in C4-dicarboxylates uptake. This Rhodobacter capsulatus (Rhodopseudomonas capsulata) protein is C4-dicarboxylate TRAP transporter small permease protein DctQ.